The following is a 236-amino-acid chain: Demethylmenaquinone methyltransferase (236 aa).

S-adenosyl-L-methionine-binding positions include threonine 58, aspartate 79, and 106 to 107; that span reads NA.

Belongs to the class I-like SAM-binding methyltransferase superfamily. MenG/UbiE family.

It catalyses the reaction a 2-demethylmenaquinol + S-adenosyl-L-methionine = a menaquinol + S-adenosyl-L-homocysteine + H(+). It functions in the pathway quinol/quinone metabolism; menaquinone biosynthesis; menaquinol from 1,4-dihydroxy-2-naphthoate: step 2/2. Functionally, methyltransferase required for the conversion of demethylmenaquinol (DMKH2) to menaquinol (MKH2). This Alkalihalophilus pseudofirmus (strain ATCC BAA-2126 / JCM 17055 / OF4) (Bacillus pseudofirmus) protein is Demethylmenaquinone methyltransferase.